The primary structure comprises 161 residues: Small ribosomal subunit protein uS8m (161 aa).

This sequence belongs to the universal ribosomal protein uS8 family. As to quaternary structure, component of the mitochondrial small ribosomal subunit (mt-SSU). Mature N.crassa 74S mitochondrial ribosomes consist of a small (37S) and a large (54S) subunit. The 37S small subunit contains a 16S ribosomal RNA (16S mt-rRNA) and 32 different proteins. The 54S large subunit contains a 23S rRNA (23S mt-rRNA) and 42 different proteins.

Its subcellular location is the mitochondrion. In terms of biological role, component of the mitochondrial ribosome (mitoribosome), a dedicated translation machinery responsible for the synthesis of mitochondrial genome-encoded proteins, including at least some of the essential transmembrane subunits of the mitochondrial respiratory chain. The mitoribosomes are attached to the mitochondrial inner membrane and translation products are cotranslationally integrated into the membrane. This chain is Small ribosomal subunit protein uS8m (mrps8), found in Neurospora crassa (strain ATCC 24698 / 74-OR23-1A / CBS 708.71 / DSM 1257 / FGSC 987).